We begin with the raw amino-acid sequence, 181 residues long: Large ribosomal subunit protein uL10 (181 aa).

Belongs to the universal ribosomal protein uL10 family. In terms of assembly, part of the ribosomal stalk of the 50S ribosomal subunit. The N-terminus interacts with L11 and the large rRNA to form the base of the stalk. The C-terminus forms an elongated spine to which L12 dimers bind in a sequential fashion forming a multimeric L10(L12)X complex.

Forms part of the ribosomal stalk, playing a central role in the interaction of the ribosome with GTP-bound translation factors. The protein is Large ribosomal subunit protein uL10 of Nostoc sp. (strain PCC 7120 / SAG 25.82 / UTEX 2576).